We begin with the raw amino-acid sequence, 802 residues long: Elongation factor G, mitochondrial (802 aa).

Residues 1 to 24 constitute a mitochondrion transit peptide; sequence MRCPSLARLPNRALSGLTRSPVRL. Residues 100-387 form the tr-type G domain; sequence SRLRNIGIAA…GVIDYLPNPS (288 aa). GTP contacts are provided by residues 109–116, 185–189, and 239–242; these read AHIDSGKT, DTPGH, and NKMD.

The protein belongs to the TRAFAC class translation factor GTPase superfamily. Classic translation factor GTPase family. EF-G/EF-2 subfamily.

It is found in the mitochondrion. The protein operates within protein biosynthesis; polypeptide chain elongation. In terms of biological role, mitochondrial GTPase that catalyzes the GTP-dependent ribosomal translocation step during translation elongation. During this step, the ribosome changes from the pre-translocational (PRE) to the post-translocational (POST) state as the newly formed A-site-bound peptidyl-tRNA and P-site-bound deacylated tRNA move to the P and E sites, respectively. Catalyzes the coordinated movement of the two tRNA molecules, the mRNA and conformational changes in the ribosome. The chain is Elongation factor G, mitochondrial (mef1) from Aspergillus fumigatus (strain CBS 144.89 / FGSC A1163 / CEA10) (Neosartorya fumigata).